A 472-amino-acid polypeptide reads, in one-letter code: Cysteine--tRNA ligase (472 aa).

Position 29 (C29) interacts with Zn(2+). The 'HIGH' region signature appears at 31–41 (PTVYNYIHIGN). Residues C214, H239, and E243 each coordinate Zn(2+). The short motif at 273–277 (KMSKS) is the 'KMSKS' region element. K276 contacts ATP.

This sequence belongs to the class-I aminoacyl-tRNA synthetase family. Monomer. The cofactor is Zn(2+).

The protein resides in the cytoplasm. The enzyme catalyses tRNA(Cys) + L-cysteine + ATP = L-cysteinyl-tRNA(Cys) + AMP + diphosphate. This chain is Cysteine--tRNA ligase, found in Lactobacillus gasseri (strain ATCC 33323 / DSM 20243 / BCRC 14619 / CIP 102991 / JCM 1131 / KCTC 3163 / NCIMB 11718 / NCTC 13722 / AM63).